The primary structure comprises 293 residues: tRNA (guanine(9)-N1)-methyltransferase (293 aa).

The tract at residues 1–31 (MSNDEINQNEEKVKRTPPLPPVPEGMSKKQW) is disordered. Thr-16 is modified (phosphothreonine). The stretch at 32 to 61 (KKMCKRQRWEENKAKYNAERRVKKKRLRHE) forms a coiled coil. The 197-residue stretch at 83–279 (EPRINVNQTD…SVLPPRKLDA (197 aa)) folds into the SAM-dependent MTase TRM10-type domain. S-adenosyl-L-methionine-binding positions include 186–187 (LT), Gly-206, 210–214 (DKNRY), Cys-218, Leu-232, and 244–246 (RVL). Asp-210 (proton acceptor) is an active-site residue. Ser-283 carries the phosphoserine modification.

Belongs to the class IV-like SAM-binding methyltransferase superfamily. TRM10 family. Monomer.

The protein localises to the cytoplasm. The protein resides in the nucleus. The catalysed reaction is guanosine(9) in tRNA + S-adenosyl-L-methionine = N(1)-methylguanosine(9) in tRNA + S-adenosyl-L-homocysteine + H(+). Its function is as follows. S-adenosyl-L-methionine-dependent guanine N(1)-methyltransferase that catalyzes the formation of N(1)-methylguanine at position 9 (m1G9) in cytoplasmic tRNAs. The polypeptide is tRNA (guanine(9)-N1)-methyltransferase (Saccharomyces cerevisiae (strain ATCC 204508 / S288c) (Baker's yeast)).